Here is a 526-residue protein sequence, read N- to C-terminus: Probable carboxypeptidase 2 (526 aa).

The signal sequence occupies residues M1–A21. An N-linked (GlcNAc...) asparagine glycan is attached at N46. Positions P53–E76 are disordered. Positions G71–A351 constitute a Peptidase M14 domain. Residue N116 is glycosylated (N-linked (GlcNAc...) asparagine). Zn(2+) contacts are provided by H136, E139, and H224. Residue E322 is the Proton donor/acceptor of the active site. Residues N393 and N459 are each glycosylated (N-linked (GlcNAc...) asparagine).

Belongs to the peptidase M14 family. Zn(2+) is required as a cofactor.

It localises to the secreted. In terms of biological role, extracellular metalloprotease that contributes to pathogenicity. The protein is Probable carboxypeptidase 2 (MCPB) of Arthroderma benhamiae (strain ATCC MYA-4681 / CBS 112371) (Trichophyton mentagrophytes).